Here is a 131-residue protein sequence, read N- to C-terminus: Large ribosomal subunit protein bL12 (131 aa).

It belongs to the bacterial ribosomal protein bL12 family. In terms of assembly, homodimer. Part of the ribosomal stalk of the 50S ribosomal subunit. Forms a multimeric L10(L12)X complex, where L10 forms an elongated spine to which 2 to 4 L12 dimers bind in a sequential fashion. Binds GTP-bound translation factors.

In terms of biological role, forms part of the ribosomal stalk which helps the ribosome interact with GTP-bound translation factors. Is thus essential for accurate translation. This chain is Large ribosomal subunit protein bL12, found in Prochlorococcus marinus (strain NATL2A).